Consider the following 102-residue polypeptide: Keratinocyte differentiation-associated protein (102 aa).

An N-terminal signal peptide occupies residues 1 to 22; the sequence is MKIPILPVVALLSLLALHAVQG.

As to expression, expression restricted to suprabasal keratinocytes of the epidermis.

The protein resides in the secreted. May act as a soluble regulator of keratinocyte differentiation. May play an important role in embryonic skin morphogenesis. This is Keratinocyte differentiation-associated protein from Mus musculus (Mouse).